The chain runs to 336 residues: Lipoyl synthase (336 aa).

Positions 81, 86, 92, 107, 111, 114, and 323 each coordinate [4Fe-4S] cluster. The region spanning Phe-93 to Ser-312 is the Radical SAM core domain.

It belongs to the radical SAM superfamily. Lipoyl synthase family. The cofactor is [4Fe-4S] cluster.

It is found in the cytoplasm. The catalysed reaction is [[Fe-S] cluster scaffold protein carrying a second [4Fe-4S](2+) cluster] + N(6)-octanoyl-L-lysyl-[protein] + 2 oxidized [2Fe-2S]-[ferredoxin] + 2 S-adenosyl-L-methionine + 4 H(+) = [[Fe-S] cluster scaffold protein] + N(6)-[(R)-dihydrolipoyl]-L-lysyl-[protein] + 4 Fe(3+) + 2 hydrogen sulfide + 2 5'-deoxyadenosine + 2 L-methionine + 2 reduced [2Fe-2S]-[ferredoxin]. The protein operates within protein modification; protein lipoylation via endogenous pathway; protein N(6)-(lipoyl)lysine from octanoyl-[acyl-carrier-protein]: step 2/2. Catalyzes the radical-mediated insertion of two sulfur atoms into the C-6 and C-8 positions of the octanoyl moiety bound to the lipoyl domains of lipoate-dependent enzymes, thereby converting the octanoylated domains into lipoylated derivatives. This is Lipoyl synthase from Stenotrophomonas maltophilia (strain K279a).